Here is a 189-residue protein sequence, read N- to C-terminus: ECF RNA polymerase sigma-E factor (189 aa).

Residues 1 to 153 (MAEQLTDQAL…TAITLRELEG (153 aa)) are binds RNAP core. Residues 25–92 (LVSRYQNKVA…KNYLTAQGRR (68 aa)) are sigma-70 factor domain-2. The short motif at 48 to 61 (DVVQESFIKAYRSI) is the Polymerase core binding element. Residues 129 to 180 (RIVFDTIHNLPEDLKTAITLRELEGLSYEDIAEIMDCPVGTVRSRIFRAREM) are sigma-70 factor domain-4. A DNA-binding region (H-T-H motif) is located at residues 156-175 (YEDIAEIMDCPVGTVRSRIF).

It belongs to the sigma-70 factor family. ECF subfamily. As to quaternary structure, interacts transiently with the RNAP catalytic core formed by RpoA, RpoB, RpoC and RpoZ (2 alpha, 1 beta, 1 beta' and 1 omega subunit) to form the RNAP holoenzyme that can initiate transcription. Interacts 1:1 with anti-sigma-E factor RseA which prevents binding to RNAP catalytic core.

It localises to the cytoplasm. With respect to regulation, ECF sigma-E is held in an inactive form by its cognate anti-sigma factor (RseA) until released by regulated intramembrane proteolysis (RIP). RIP occurs when an extracytoplasmic signal (periplasmic stress and excess LPS) triggers a concerted proteolytic cascade to transmit information and elicit cellular responses. The anti-sigma factor RseA is an inner membrane protein, binding sigma-E in the cytoplasm and RseB in the periplasm. RseA is first cut extracytoplasmically (site-1 protease, S1P, by DegS), then within the membrane itself (site-2 protease, S2P, by RseP), while cytoplasmic proteases (predominantly ClpX-ClpP) finish degrading the regulatory protein, liberating sigma-E. Degradation of RseA requires 2 signals to activate DegS; an outer membrane protein (OMP) signal activates DegS, while an LPS signal causes release of RseB from RseA, freeing RseA to be cleaved. Sigma factors are initiation factors that promote the attachment of RNA polymerase (RNAP) to specific initiation sites and are then released. Extracytoplasmic function (ECF) sigma-E controls the envelope stress response, responding to periplasmic protein stress, increased levels of periplasmic lipopolysaccharide (LPS) as well as heat shock and oxidative stress; it controls protein processing in the extracytoplasmic compartment. This is ECF RNA polymerase sigma-E factor (rpoE) from Haemophilus influenzae (strain ATCC 51907 / DSM 11121 / KW20 / Rd).